A 772-amino-acid polypeptide reads, in one-letter code: Lon protease (772 aa).

The region spanning 6–200 is the Lon N-terminal domain; the sequence is YPTLPLKNTV…LMHRYLNHEV (195 aa). Residue 352–359 participates in ATP binding; sequence GPPGVGKT. Residues 588–769 form the Lon proteolytic domain; that stretch reads QLAPGVAAGL…EEVLAEAIPD (182 aa). Catalysis depends on residues Ser675 and Lys718.

It belongs to the peptidase S16 family. Homohexamer. Organized in a ring with a central cavity.

Its subcellular location is the cytoplasm. It catalyses the reaction Hydrolysis of proteins in presence of ATP.. Functionally, ATP-dependent serine protease that mediates the selective degradation of mutant and abnormal proteins as well as certain short-lived regulatory proteins. Required for cellular homeostasis and for survival from DNA damage and developmental changes induced by stress. Degrades polypeptides processively to yield small peptide fragments that are 5 to 10 amino acids long. Binds to DNA in a double-stranded, site-specific manner. The chain is Lon protease from Nitrosococcus oceani (strain ATCC 19707 / BCRC 17464 / JCM 30415 / NCIMB 11848 / C-107).